A 415-amino-acid chain; its full sequence is Putative serpin-Z6C (415 aa).

Residues glycine 357 to alanine 381 form an RCL region.

Belongs to the serpin family.

Probable serine protease inhibitor. The polypeptide is Putative serpin-Z6C (Oryza sativa subsp. japonica (Rice)).